Reading from the N-terminus, the 821-residue chain is BDNF/NT-3 growth factors receptor (821 aa).

A signal peptide spans 1 to 31; the sequence is MSPWLKWHGPAMARLWGLCLLVLGFWRASLA. 2 disulfide bridges follow: Cys-32-Cys-38 and Cys-36-Cys-45. Positions 32–61 constitute an LRRNT domain; that stretch reads CPTSCKCSSARIWCTEPSPGIVAFPRLEPN. Over 32-429 the chain is Extracellular; that stretch reads CPTSCKCSSA…DVADQSNREH (398 aa). N-linked (GlcNAc...) asparagine glycans are attached at residues Asn-67, Asn-95, and Asn-121. LRR repeat units lie at residues 92 to 113 and 116 to 137; these read GLRN…AFLK and NLRH…HFRH. Residues 148–196 form the LRRCT domain; the sequence is NPFTCSCDIMWLKTLQETKSSPDTQDLYCLNESSKNMPLANLQIPNCGL. 2 cysteine pairs are disulfide-bonded: Cys-152–Cys-176 and Cys-154–Cys-194. Residues Asn-178, Asn-205, Asn-241, Asn-254, Asn-280, Asn-325, Asn-338, Asn-350, and Asn-411 are each glycosylated (N-linked (GlcNAc...) asparagine). Ig-like C2-type domains lie at 197-282 and 301-365; these read PSAR…VNLT and WCIP…MAKN. An intrachain disulfide couples Cys-218 to Cys-266. Cys-302 and Cys-345 are oxidised to a cystine. A helical membrane pass occupies residues 430–453; the sequence is LSVYAVVVIASVVGFCLLVMLLLL. Positions 454–465 are interaction with MAPK8IP3/JIP3; that stretch reads KLARHSKFGMKG. Residues 454–821 lie on the Cytoplasmic side of the membrane; sequence KLARHSKFGM…ASPVYLDILG (368 aa). Positions 474 to 497 are disordered; it reads DDSASPLHHISNGSNTPSSSEGGP. A compositionally biased stretch (polar residues) spans 484–494; it reads SNGSNTPSSSE. Tyr-515 is modified (phosphotyrosine). The region spanning 537–806 is the Protein kinase domain; the sequence is IVLKRELGEG…KNIKSIHTLL (270 aa). ATP is bound by residues 543–551 and Lys-571; that span reads LGEGAFGKV. The active-site Proton acceptor is Asp-675. 4 positions are modified to phosphotyrosine; by autocatalysis: Tyr-701, Tyr-705, Tyr-706, and Tyr-816.

It belongs to the protein kinase superfamily. Tyr protein kinase family. Insulin receptor subfamily. Exists in a dynamic equilibrium between monomeric (low affinity) and dimeric (high affinity) structures. Interacts (phosphorylated upon activation by BDNF) with SHC1; mediates SHC1 phosphorylation and activation. Interacts (phosphorylated upon activation by BDNF) with PLCG1 and/or PLCG2; mediates PLCG1 phosphorylation and activation. Interacts with SH2B1 and SH2B2. Interacts with NGFR; may regulate the ligand specificity of the receptor. Interacts with SORCS2; this interaction is important for normal targeting to post-synaptic densities in response to high-frequency stimulation. Interacts (phosphorylated upon ligand-binding) with SH2D1A; regulates NTRK2. Interacts with SQSTM1 and KIDINS220. Interacts (phosphorylated upon ligand-binding) with FRS2; activates the MAPK signaling pathway. Interacts with APPL1. Interacts with MAPK8IP3/JIP3 and KLC1; interaction with KLC1 is mediated by MAPK8IP3/JIP3. Interacts with SORL1; this interaction facilitates NTRK2 trafficking between synaptic plasma membranes, postsynaptic densities and cell soma, hence positively regulates BDNF signaling. Interacts with SLITRK2. Phosphorylated. Undergoes ligand-mediated autophosphorylation that is required for interaction with SHC1 and PLCG1 and other downstream effectors. Some isoforms are not phosphorylated. In terms of processing, ubiquitinated. Undergoes polyubiquitination upon activation; regulated by NGFR. Ubiquitination regulates the internalization of the receptor. As to expression, expressed in the brain, in neurons (at protein level). Detected in hippocampus (at protein level). Widely expressed in the central and peripheral nervous system. The different forms are differentially expressed in various cell types. Isoform GP95-TRKB is specifically expressed in glial cells.

It is found in the cell membrane. Its subcellular location is the endosome membrane. It localises to the early endosome membrane. The protein localises to the cell projection. The protein resides in the axon. It is found in the dendrite. Its subcellular location is the cytoplasm. It localises to the perinuclear region. The protein localises to the postsynaptic density. It carries out the reaction L-tyrosyl-[protein] + ATP = O-phospho-L-tyrosyl-[protein] + ADP + H(+). The formation of active receptors dimers able to fully transduce the ligand-mediated signal, may be negatively regulated by the formation of inactive heterodimers with the non-catalytic isoforms. The neuronal activity and the influx of calcium positively regulate the kinase activity and the internalization of the receptor which are both important for active signaling. Regulated by NGFR that may control the internalization of the receptor. NGFR may also stimulate the activation by BDNF compared to NTF3 and NTF4. SH2D1A inhibits the autophosphorylation of the receptor, and alters the recruitment and activation of downstream effectors and signaling cascades. Its function is as follows. Receptor tyrosine kinase involved in the development and the maturation of the central and the peripheral nervous systems through regulation of neuron survival, proliferation, migration, differentiation, and synapse formation and plasticity. Receptor for BDNF/brain-derived neurotrophic factor and NTF4/neurotrophin-4. Alternatively can also bind NTF3/neurotrophin-3 which is less efficient in activating the receptor but regulates neuron survival through NTRK2. Upon ligand-binding, undergoes homodimerization, autophosphorylation and activation. Recruits, phosphorylates and/or activates several downstream effectors including SHC1, FRS2, SH2B1, SH2B2 and PLCG1 that regulate distinct overlapping signaling cascades. Through SHC1, FRS2, SH2B1, SH2B2 activates the GRB2-Ras-MAPK cascade that regulates for instance neuronal differentiation including neurite outgrowth. Through the same effectors controls the Ras-PI3 kinase-AKT1 signaling cascade that mainly regulates growth and survival. Through PLCG1 and the downstream protein kinase C-regulated pathways controls synaptic plasticity. Thereby, plays a role in learning and memory by regulating both short term synaptic function and long-term potentiation. PLCG1 also leads to NF-Kappa-B activation and the transcription of genes involved in cell survival. Hence, it is able to suppress anoikis, the apoptosis resulting from loss of cell-matrix interactions. Isoform GP95-TRKB may also play a role in neutrophin-dependent calcium signaling in glial cells and mediate communication between neurons and glia. The chain is BDNF/NT-3 growth factors receptor from Mus musculus (Mouse).